The sequence spans 696 residues: Putative zinc metalloproteinase YIL108W (696 aa).

Lysine 245 participates in a covalent cross-link: Glycyl lysine isopeptide (Lys-Gly) (interchain with G-Cter in ubiquitin). A Zn(2+)-binding site is contributed by histidine 318. The active site involves glutamate 319. Histidine 322 and histidine 328 together coordinate Zn(2+). Serine 361 bears the Phosphoserine mark. Residues lysine 478, lysine 518, lysine 579, lysine 590, and lysine 596 each participate in a glycyl lysine isopeptide (Lys-Gly) (interchain with G-Cter in ubiquitin) cross-link. In terms of domain architecture, Jacalin-type lectin spans 522–695 (GIKSPLYGRS…VDAFGIIYGA (174 aa)).

The protein belongs to the peptidase M10B family. The cofactor is Zn(2+).

The protein resides in the cytoplasm. In Saccharomyces cerevisiae (strain ATCC 204508 / S288c) (Baker's yeast), this protein is Putative zinc metalloproteinase YIL108W.